The chain runs to 437 residues: Glutamate-1-semialdehyde 2,1-aminomutase (437 aa).

N6-(pyridoxal phosphate)lysine is present on Lys-274.

Belongs to the class-III pyridoxal-phosphate-dependent aminotransferase family. HemL subfamily. As to quaternary structure, homodimer. It depends on pyridoxal 5'-phosphate as a cofactor.

The protein localises to the cytoplasm. It catalyses the reaction (S)-4-amino-5-oxopentanoate = 5-aminolevulinate. The protein operates within porphyrin-containing compound metabolism; protoporphyrin-IX biosynthesis; 5-aminolevulinate from L-glutamyl-tRNA(Glu): step 2/2. In Leptothrix cholodnii (strain ATCC 51168 / LMG 8142 / SP-6) (Leptothrix discophora (strain SP-6)), this protein is Glutamate-1-semialdehyde 2,1-aminomutase.